Here is a 758-residue protein sequence, read N- to C-terminus: Catalase-peroxidase (758 aa).

The segment covering 1–10 (MSDTQDNAPA) has biased composition (polar residues). A disordered region spans residues 1-59 (MSDTQDNAPASAQGVDQKAAAGCPVAHDSVTAHGSESESPAIDSPTPHSGGRPRTNRDW). Positions 128–250 (WHAAGTYRID…VGATEMGLIY (123 aa)) form a cross-link, tryptophyl-tyrosyl-methioninium (Trp-Tyr) (with M-276). His-129 acts as the Proton acceptor in catalysis. A cross-link (tryptophyl-tyrosyl-methioninium (Tyr-Met) (with W-128)) is located at residues 250 to 276 (YVNPEGPRGNADPAAAAHFIRETFRRM). Position 291 (His-291) interacts with heme b.

It belongs to the peroxidase family. Peroxidase/catalase subfamily. In terms of assembly, homodimer or homotetramer. Requires heme b as cofactor. In terms of processing, formation of the three residue Trp-Tyr-Met cross-link is important for the catalase, but not the peroxidase activity of the enzyme.

The catalysed reaction is H2O2 + AH2 = A + 2 H2O. It catalyses the reaction 2 H2O2 = O2 + 2 H2O. Its function is as follows. Bifunctional enzyme with both catalase and broad-spectrum peroxidase activity. The chain is Catalase-peroxidase from Salinispora arenicola (strain CNS-205).